Consider the following 196-residue polypeptide: Peptidyl-tRNA hydrolase (196 aa).

Residue Y18 participates in tRNA binding. The active-site Proton acceptor is H23. Positions 69, 71, and 117 each coordinate tRNA.

This sequence belongs to the PTH family. Monomer.

It is found in the cytoplasm. It catalyses the reaction an N-acyl-L-alpha-aminoacyl-tRNA + H2O = an N-acyl-L-amino acid + a tRNA + H(+). In terms of biological role, hydrolyzes ribosome-free peptidyl-tRNAs (with 1 or more amino acids incorporated), which drop off the ribosome during protein synthesis, or as a result of ribosome stalling. Its function is as follows. Catalyzes the release of premature peptidyl moieties from peptidyl-tRNA molecules trapped in stalled 50S ribosomal subunits, and thus maintains levels of free tRNAs and 50S ribosomes. This chain is Peptidyl-tRNA hydrolase, found in Aliivibrio fischeri (strain MJ11) (Vibrio fischeri).